The primary structure comprises 309 residues: Zinc finger protein-like 1 homolog (309 aa).

The B box-type; degenerate zinc finger occupies methionine 1 to tryptophan 43. An RING-type; atypical zinc finger spans residues cysteine 53–serine 101. Positions glycine 200 to asparagine 221 are disordered. Residues lysine 254–methionine 274 form a helical membrane-spanning segment.

The protein belongs to the ZFPL1 family.

The protein resides in the membrane. The sequence is that of Zinc finger protein-like 1 homolog from Caenorhabditis elegans.